The chain runs to 585 residues: Putative lipase ATG15 (585 aa).

Residues 1 to 21 (MMGLDLLVSLLALSVSPCIAA) form a helical; Signal-anchor for type II membrane protein membrane-spanning segment. Over 22–585 (TRSPLQIPVL…SASPPITSPP (564 aa)) the chain is Lumenal. N-linked (GlcNAc...) asparagine glycosylation is found at Asn171, Asn193, and Asn275. Ser291 serves as the catalytic Charge relay system. N-linked (GlcNAc...) asparagine glycans are attached at residues Asn340 and Asn437. Residues 500 to 526 (TTTSTVPTASPAPTITPTSPPTTTAST) form a disordered region.

It belongs to the AB hydrolase superfamily. Lipase family. Binds to both phosphatidylinositol (PI) and phosphatidylinositol 3,5-bisphosphate (PIP2).

It is found in the endosome. The protein resides in the multivesicular body membrane. It localises to the prevacuolar compartment membrane. The catalysed reaction is a triacylglycerol + H2O = a diacylglycerol + a fatty acid + H(+). Functionally, lipase which is essential for lysis of subvacuolar cytoplasm to vacuole targeted bodies and intravacuolar autophagic bodies. Involved in the lysis of intravacuolar multivesicular body (MVB) vesicles. The intravacuolar membrane disintegration by ATG15 is critical to life span extension. In Ajellomyces capsulatus (strain NAm1 / WU24) (Darling's disease fungus), this protein is Putative lipase ATG15 (ATG15).